The sequence spans 913 residues: WD repeat-containing protein 44 (913 aa).

Residues 1–14 are compositionally biased toward acidic residues; sequence MASESDTEEFYDAP. The tract at residues 1 to 24 is disordered; sequence MASESDTEEFYDAPEDVHLGGGYP. Ala2 bears the N-acetylalanine mark. The segment at 2-170 is binding activity; the sequence is ASESDTEEFY…SSTEQLNVLE (169 aa). Residue Ser3 is modified to Phosphoserine. Positions 9 to 15 match the FFAT-like motif motif; the sequence is EFYDAPE. Tyr11 is modified (phosphotyrosine). Phosphoserine occurs at positions 27, 50, 66, 71, 81, 96, and 126. Residues 119-184 are a coiled coil; the sequence is EESQKAESQN…VLNKEAVEVK (66 aa). Phosphothreonine is present on residues Thr158 and Thr219. The disordered stretch occupies residues 205–348; that stretch reads AVEEVAPAKP…RPRSNSGREL (144 aa). The segment at 211–257 is important for interaction with ARHGAP26 AND ARHGAP10; that stretch reads PAKPPRHLTPEPDIVASTKKPVPARPPPPTNFPPPRPPPPSRPAPPP. Positions 233 to 256 are enriched in pro residues; the sequence is PARPPPPTNFPPPRPPPPSRPAPP. Ser262 carries the phosphoserine modification. Residues 262-278 are compositionally biased toward basic and acidic residues; it reads SELEFETLKTPDIDVPK. At Thr271 the chain carries Phosphothreonine. Polar residues predominate over residues 280 to 311; sequence NITSDSLLTASMASESTVKDSQPSLDLASATS. The tract at residues 334 to 347 is important for interaction with RAB11A; that stretch reads VMGPQRPRSNSGRE. Residues Ser342 and Ser344 each carry the phosphoserine; by PKB/AKT1 modification. Thr349 bears the Phosphothreonine mark. Disordered regions lie at residues 397-424 and 459-480; these read SNDAAQSDDEEKLQSQPTDTDGGRLKQK and DEVFHTDQDDPSSSDDEGMPYT. Phosphoserine occurs at positions 403, 470, 471, and 472. The segment covering 467–476 has biased composition (acidic residues); sequence DDPSSSDDEG. Tyr479 carries the phosphotyrosine modification. The stretch at 509 to 548 is one WD 1 repeat; sequence EHMGAVWTMKFSHCGRLLASAGQDNVVRIWALKNAFDYFN. The tract at residues 557–593 is disordered; it reads EGRVSPSPSQESLSSSKSDTDTGVCSGTDEDPDDKNA. Ser561 and Ser565 each carry phosphoserine. Residues 561–573 are compositionally biased toward low complexity; that stretch reads SPSPSQESLSSSK. 6 WD repeats span residues 605–643, 645–685, 690–729, 740–779, 784–823, and 876–913; these read GHTADLLDLSWSKNYFLLSSSMDKTVRLWHISRRECLCC, QHID…VALW, GQTKLITAANFCQNGKYAVIGTYDGRCIFYDTEHLKYHTQ, KVGRKITGIEPLPGENKILVTSNDSRIRLYDLRDLSLSMK, VNSSSQIKASFSHDFTYLVSGSEDKYVYIWSTYHDLSKFT, and VLDATPSGIMKTDNTEVLLSADFTGAIKVFVNKRKNVS.

As to quaternary structure, interacts with the GTP-bound form of RAB11A and RAB11B. Interacts with GRAF1/ARHGAP26 or GRAF2/ARHGAP10; the interaction connects the endoplasmic reticulum (ER) with the endosomal tubule. Interacts (via FFAT-like motif) with VAPA (via MSP domain) or VAPB (via MSP domain); the interaction connects the ER with the endosomal tubule. Does not bind to RAB7, RAB10, RAB14, RAB35 and RAB8A. Phosphorylated by ATK1; the phosphorylation stabilizes its interaction with RAB11A and RAB11B.

It localises to the cytoplasm. It is found in the cytosol. Its subcellular location is the perinuclear region. The protein resides in the endosome membrane. The protein localises to the golgi apparatus. It localises to the trans-Golgi network. Its function is as follows. Downstream effector for Rab11 which regulates Rab11 intracellular membrane trafficking functions such as endocytic recycling, intracellular ciliogenesis and protein export. ATK1-mediated phosphorylation of WDR44 induces binding to Rab11 which activates endocytic recycling of transferrin receptor back to the plasma membrane. When bound to Rab11, prevents the formation of the ciliogenic Rab11-Rabin8/RAB3IP-RAB11FIP3 complex, therefore inhibiting preciliary trafficking and ciliogenesis. Participates in neo-synthesized protein export by connecting the endoplasmic reticulum (ER) with the endosomal tubule via direct interactions with the integral ER proteins VAPA or VAPB and the endosomal protein GRAFs (GRAF1/ARHGAP26 or GRAF2/ARHGAP10), which facilitates the transfer of proteins such as E-cadherin, MPP14 and CFTR into a Rab8-Rab10-Rab11-dependent export route. In Homo sapiens (Human), this protein is WD repeat-containing protein 44.